The chain runs to 416 residues: Ribulose bisphosphate carboxylase large chain (416 aa).

Substrate-binding residues include asparagine 100 and threonine 150. The active-site Proton acceptor is lysine 152. A substrate-binding site is contributed by lysine 154. 3 residues coordinate Mg(2+): lysine 178, aspartate 180, and glutamate 181. N6-carboxylysine is present on lysine 178. The active-site Proton acceptor is histidine 271. The substrate site is built by arginine 272, histidine 304, and serine 356.

The protein belongs to the RuBisCO large chain family. Type I subfamily. As to quaternary structure, heterohexadecamer of 8 large chains and 8 small chains; disulfide-linked. The disulfide link is formed within the large subunit homodimers. Mg(2+) serves as cofactor. In terms of processing, the disulfide bond which can form in the large chain dimeric partners within the hexadecamer appears to be associated with oxidative stress and protein turnover.

Its subcellular location is the plastid. The protein localises to the chloroplast. The catalysed reaction is 2 (2R)-3-phosphoglycerate + 2 H(+) = D-ribulose 1,5-bisphosphate + CO2 + H2O. It catalyses the reaction D-ribulose 1,5-bisphosphate + O2 = 2-phosphoglycolate + (2R)-3-phosphoglycerate + 2 H(+). Functionally, ruBisCO catalyzes two reactions: the carboxylation of D-ribulose 1,5-bisphosphate, the primary event in carbon dioxide fixation, as well as the oxidative fragmentation of the pentose substrate in the photorespiration process. Both reactions occur simultaneously and in competition at the same active site. This chain is Ribulose bisphosphate carboxylase large chain (rbcL), found in Cheiropleuria bicuspis (Fern).